Reading from the N-terminus, the 206-residue chain is Methylthioribulose-1-phosphate dehydratase (206 aa).

2 residues coordinate Zn(2+): histidine 96 and histidine 98.

It belongs to the aldolase class II family. MtnB subfamily. It depends on Zn(2+) as a cofactor.

The catalysed reaction is 5-(methylsulfanyl)-D-ribulose 1-phosphate = 5-methylsulfanyl-2,3-dioxopentyl phosphate + H2O. It functions in the pathway amino-acid biosynthesis; L-methionine biosynthesis via salvage pathway; L-methionine from S-methyl-5-thio-alpha-D-ribose 1-phosphate: step 2/6. Functionally, catalyzes the dehydration of methylthioribulose-1-phosphate (MTRu-1-P) into 2,3-diketo-5-methylthiopentyl-1-phosphate (DK-MTP-1-P). The sequence is that of Methylthioribulose-1-phosphate dehydratase from Exiguobacterium sibiricum (strain DSM 17290 / CCUG 55495 / CIP 109462 / JCM 13490 / 255-15).